A 426-amino-acid polypeptide reads, in one-letter code: Enolase (426 aa).

Gln-163 lines the (2R)-2-phosphoglycerate pocket. The active-site Proton donor is the Glu-205. Positions 242, 283, and 310 each coordinate Mg(2+). 4 residues coordinate (2R)-2-phosphoglycerate: Lys-335, Arg-364, Ser-365, and Lys-386. Lys-335 functions as the Proton acceptor in the catalytic mechanism.

Belongs to the enolase family. Mg(2+) serves as cofactor.

It is found in the cytoplasm. It localises to the secreted. The protein localises to the cell surface. It catalyses the reaction (2R)-2-phosphoglycerate = phosphoenolpyruvate + H2O. It participates in carbohydrate degradation; glycolysis; pyruvate from D-glyceraldehyde 3-phosphate: step 4/5. Functionally, catalyzes the reversible conversion of 2-phosphoglycerate (2-PG) into phosphoenolpyruvate (PEP). It is essential for the degradation of carbohydrates via glycolysis. The polypeptide is Enolase (Paenarthrobacter aurescens (strain TC1)).